A 297-amino-acid polypeptide reads, in one-letter code: ATP phosphoribosyltransferase (297 aa).

The protein belongs to the ATP phosphoribosyltransferase family.

It is found in the cytoplasm. The enzyme catalyses 1-(5-phospho-beta-D-ribosyl)-ATP + diphosphate = 5-phospho-alpha-D-ribose 1-diphosphate + ATP. Its pathway is amino-acid biosynthesis; L-histidine biosynthesis; L-histidine from 5-phospho-alpha-D-ribose 1-diphosphate: step 1/9. Catalyzes the condensation of ATP and 5-phosphoribose 1-diphosphate to form N'-(5'-phosphoribosyl)-ATP (PR-ATP). Has a crucial role in the pathway because the rate of histidine biosynthesis seems to be controlled primarily by regulation of the enzymatic activity. This chain is ATP phosphoribosyltransferase (HIS1), found in Eremothecium gossypii (strain ATCC 10895 / CBS 109.51 / FGSC 9923 / NRRL Y-1056) (Yeast).